We begin with the raw amino-acid sequence, 116 residues long: ATP synthase lipid-binding protein, mitochondrial (116 aa).

Residues 1 to 24 (MYCQRLALPLTRSLLASRAPLALR) constitute a mitochondrion transit peptide. A helical membrane pass occupies residues 57–77 (VGVAGSGAGIGNVFGALVIGY). At Lys-84 the chain carries N6,N6,N6-trimethyllysine. Residues 92 to 112 (ILGFALSEAMGLFCLTMGFMI) traverse the membrane as a helical segment.

The protein belongs to the ATPase C chain family. As to quaternary structure, F-type ATPases have 2 components, CF(1) - the catalytic core - and CF(0) - the membrane proton channel. CF(1) has five subunits: alpha(3), beta(3), gamma(1), delta(1), epsilon(1). CF(0) has three main subunits: a, b and c. Post-translationally, trimethylated by ATPSCKMT at Lys-84. Methylation may be required for proper incorporation of the C subunit into the ATP synthase complex and mitochondrial respiration.

Its subcellular location is the mitochondrion membrane. In terms of biological role, mitochondrial membrane ATP synthase (F(1)F(0) ATP synthase or Complex V) produces ATP from ADP in the presence of a proton gradient across the membrane which is generated by electron transport complexes of the respiratory chain. F-type ATPases consist of two structural domains, F(1) - containing the extramembraneous catalytic core and F(0) - containing the membrane proton channel, linked together by a central stalk and a peripheral stalk. During catalysis, ATP synthesis in the catalytic domain of F(1) is coupled via a rotary mechanism of the central stalk subunits to proton translocation. Part of the complex F(0) domain. A homomeric c-ring of probably 10 subunits is part of the complex rotary element. This is ATP synthase lipid-binding protein, mitochondrial from Caenorhabditis briggsae.